The sequence spans 62 residues: Photosystem II reaction center protein Z (62 aa).

The next 2 helical transmembrane spans lie at 8–28 (AVFA…VVFA) and 41–61 (FSGT…NSLI).

The protein belongs to the PsbZ family. As to quaternary structure, PSII is composed of 1 copy each of membrane proteins PsbA, PsbB, PsbC, PsbD, PsbE, PsbF, PsbH, PsbI, PsbJ, PsbK, PsbL, PsbM, PsbT, PsbY, PsbZ, Psb30/Ycf12, at least 3 peripheral proteins of the oxygen-evolving complex and a large number of cofactors. It forms dimeric complexes.

It localises to the plastid. The protein localises to the chloroplast thylakoid membrane. In terms of biological role, may control the interaction of photosystem II (PSII) cores with the light-harvesting antenna, regulates electron flow through the 2 photosystem reaction centers. PSII is a light-driven water plastoquinone oxidoreductase, using light energy to abstract electrons from H(2)O, generating a proton gradient subsequently used for ATP formation. This is Photosystem II reaction center protein Z from Arabidopsis thaliana (Mouse-ear cress).